Consider the following 2118-residue polypeptide: Cilia- and flagella-associated protein 65 (2118 aa).

Residues 6-26 (GSLRALLLAAAAAAAAAAGAV) form a helical membrane-spanning segment. Residues 615-736 (FLHSNPEFGP…HTPRLTTDLP (122 aa)) form the MSP domain. Disordered regions lie at residues 1007–1029 (APLL…LDAG), 1764–1909 (SGGS…DDFA), and 1924–1958 (AGGG…APPR). The segment covering 1825-1834 (GGAGGAPGGD) has biased composition (gly residues). Positions 1840-1849 (RPGTPSMTAA) are enriched in low complexity. The segment covering 1850–1859 (AHHHHHHPRH) has biased composition (basic residues). Low complexity-rich tracts occupy residues 1892–1902 (SISGAPDPDSA) and 1936–1949 (PGGS…ELAP). A coiled-coil region spans residues 2016 to 2045 (AVRAAAEAARAEAEARAAAEAATKAAAEAE).

The protein belongs to the CFAP65 family.

Its subcellular location is the cell projection. The protein resides in the cilium. The protein localises to the flagellum membrane. It is found in the cytoplasm. Functionally, may play a role in flagellar formation and mobility. This Chlamydomonas reinhardtii (Chlamydomonas smithii) protein is Cilia- and flagella-associated protein 65.